A 211-amino-acid chain; its full sequence is Large ribosomal subunit protein uL3 (211 aa).

Residues 116-142 (GTSGVMKKHGFSGNRASHGVSRNHRLG) form a disordered region.

It belongs to the universal ribosomal protein uL3 family. Part of the 50S ribosomal subunit. Forms a cluster with proteins L14 and L19.

One of the primary rRNA binding proteins, it binds directly near the 3'-end of the 23S rRNA, where it nucleates assembly of the 50S subunit. This is Large ribosomal subunit protein uL3 from Fusobacterium nucleatum subsp. nucleatum (strain ATCC 25586 / DSM 15643 / BCRC 10681 / CIP 101130 / JCM 8532 / KCTC 2640 / LMG 13131 / VPI 4355).